A 616-amino-acid polypeptide reads, in one-letter code: Chaperone protein HscA (616 aa).

This sequence belongs to the heat shock protein 70 family.

In terms of biological role, chaperone involved in the maturation of iron-sulfur cluster-containing proteins. Has a low intrinsic ATPase activity which is markedly stimulated by HscB. Involved in the maturation of IscU. The chain is Chaperone protein HscA from Escherichia coli O45:K1 (strain S88 / ExPEC).